The sequence spans 200 residues: NADH-quinone oxidoreductase subunit C (200 aa).

This sequence belongs to the complex I 30 kDa subunit family. In terms of assembly, NDH-1 is composed of 14 different subunits. Subunits NuoB, C, D, E, F, and G constitute the peripheral sector of the complex.

Its subcellular location is the cell inner membrane. It catalyses the reaction a quinone + NADH + 5 H(+)(in) = a quinol + NAD(+) + 4 H(+)(out). Functionally, NDH-1 shuttles electrons from NADH, via FMN and iron-sulfur (Fe-S) centers, to quinones in the respiratory chain. The immediate electron acceptor for the enzyme in this species is believed to be ubiquinone. Couples the redox reaction to proton translocation (for every two electrons transferred, four hydrogen ions are translocated across the cytoplasmic membrane), and thus conserves the redox energy in a proton gradient. The chain is NADH-quinone oxidoreductase subunit C from Burkholderia cenocepacia (strain HI2424).